A 105-amino-acid polypeptide reads, in one-letter code: Co-chaperonin GroES 3 (105 aa).

This sequence belongs to the GroES chaperonin family. As to quaternary structure, heptamer of 7 subunits arranged in a ring. Interacts with the chaperonin GroEL.

It localises to the cytoplasm. In terms of biological role, together with the chaperonin GroEL, plays an essential role in assisting protein folding. The GroEL-GroES system forms a nano-cage that allows encapsulation of the non-native substrate proteins and provides a physical environment optimized to promote and accelerate protein folding. GroES binds to the apical surface of the GroEL ring, thereby capping the opening of the GroEL channel. In Rhizobium meliloti (strain 1021) (Ensifer meliloti), this protein is Co-chaperonin GroES 3.